The following is a 272-amino-acid chain: GPN-loop GTPase 3 (272 aa).

13-18 serves as a coordination point for GTP; it reads GAGKST. Positions 70 to 72 match the Gly-Pro-Asn (GPN)-loop; involved in dimer interface motif; it reads GPN. 173–176 contributes to the GTP binding site; the sequence is SKLD.

It belongs to the GPN-loop GTPase family. Heterodimers with NPA3/GPN1 or GPN2. Binds to RNA polymerase II (RNAPII).

Its function is as follows. Small GTPase required for proper nuclear localization of RNA polymerase II and III (RNAPII and RNAPIII). May act at an RNAP assembly step prior to nuclear import. Promotes sister chromatid separation during anaphase. This chain is GPN-loop GTPase 3, found in Saccharomyces cerevisiae (strain ATCC 204508 / S288c) (Baker's yeast).